We begin with the raw amino-acid sequence, 357 residues long: Protein pelota homolog (357 aa).

Belongs to the eukaryotic release factor 1 family. Pelota subfamily. As to quaternary structure, monomer. Requires a divalent metal cation as cofactor.

It localises to the cytoplasm. Functionally, may function in recognizing stalled ribosomes, interact with stem-loop structures in stalled mRNA molecules, and effect endonucleolytic cleavage of the mRNA. May play a role in the release non-functional ribosomes and degradation of damaged mRNAs. Has endoribonuclease activity. This chain is Protein pelota homolog, found in Methanocella arvoryzae (strain DSM 22066 / NBRC 105507 / MRE50).